The sequence spans 473 residues: Serine palmitoyltransferase 1 (473 aa).

The Lumenal portion of the chain corresponds to 1-15; the sequence is MATATEQWVLVEMVQ. The interval 1 to 66 is interaction with SPTLC2; sequence MATATEQWVL…KEELIEEWQP (66 aa). Residues 16–36 traverse the membrane as a helical segment; it reads ALYEAPAYHLILEGILILWII. The Cytoplasmic portion of the chain corresponds to 37-473; sequence RLLFSKTYKL…IKEVAQAVLL (437 aa). The residue at position 164 (Tyr-164) is a Phosphotyrosine; by ABL.

The protein belongs to the class-II pyridoxal-phosphate-dependent aminotransferase family. Component of the serine palmitoyltransferase (SPT) complex, which is also composed of SPTLC2 or SPTLC3 and SPTSSA or SPTSSB. The heterodimer with SPTLC2 or SPTLC3 forms the catalytic core of the enzyme, while SPTSSA or SPTSSB subunits determine substrate specificity. SPT also interacts with ORMDL proteins, especially ORMDL3, which negatively regulate SPT activity in the presence of ceramides. Forms dimers of heterodimers with SPTLC2. Interacts with RTN4. Pyridoxal 5'-phosphate serves as cofactor. In terms of processing, phosphorylation at Tyr-164 inhibits activity and promotes cell survival.

Its subcellular location is the endoplasmic reticulum membrane. It carries out the reaction L-serine + hexadecanoyl-CoA + H(+) = 3-oxosphinganine + CO2 + CoA. The catalysed reaction is octadecanoyl-CoA + L-serine + H(+) = 3-oxoeicosasphinganine + CO2 + CoA. The enzyme catalyses tetradecanoyl-CoA + L-serine + H(+) = 3-oxohexadecasphinganine + CO2 + CoA. It catalyses the reaction dodecanoyl-CoA + L-serine + H(+) = 3-oxotetradecasphinganine + CO2 + CoA. Its pathway is lipid metabolism; sphingolipid metabolism. Its activity is regulated as follows. SPT complex catalytic activity is negatively regulated by ORMDL proteins, including ORMDL3, in the presence of ceramides. This mechanism allows to maintain ceramide levels at sufficient concentrations for the production of complex sphingolipids, but which prevents the accumulation of ceramides to levels that trigger apoptosis. In terms of biological role, component of the serine palmitoyltransferase multisubunit enzyme (SPT) that catalyzes the initial and rate-limiting step in sphingolipid biosynthesis by condensing L-serine and activated acyl-CoA (most commonly palmitoyl-CoA) to form long-chain bases. The SPT complex is also composed of SPTLC2 or SPTLC3 and SPTSSA or SPTSSB. Within this complex, the heterodimer with SPTLC2 or SPTLC3 forms the catalytic core. The composition of the serine palmitoyltransferase (SPT) complex determines the substrate preference. The SPTLC1-SPTLC2-SPTSSA complex shows a strong preference for C16-CoA substrate, while the SPTLC1-SPTLC3-SPTSSA isozyme uses both C14-CoA and C16-CoA as substrates, with a slight preference for C14-CoA. The SPTLC1-SPTLC2-SPTSSB complex shows a strong preference for C18-CoA substrate, while the SPTLC1-SPTLC3-SPTSSB isozyme displays an ability to use a broader range of acyl-CoAs, without apparent preference. Required for adipocyte cell viability and metabolic homeostasis. This Macaca fascicularis (Crab-eating macaque) protein is Serine palmitoyltransferase 1 (SPTLC1).